The following is a 179-amino-acid chain: ATP synthase subunit delta (179 aa).

This sequence belongs to the ATPase delta chain family. In terms of assembly, F-type ATPases have 2 components, F(1) - the catalytic core - and F(0) - the membrane proton channel. F(1) has five subunits: alpha(3), beta(3), gamma(1), delta(1), epsilon(1). F(0) has three main subunits: a(1), b(2) and c(10-14). The alpha and beta chains form an alternating ring which encloses part of the gamma chain. F(1) is attached to F(0) by a central stalk formed by the gamma and epsilon chains, while a peripheral stalk is formed by the delta and b chains.

It is found in the cell membrane. Its function is as follows. F(1)F(0) ATP synthase produces ATP from ADP in the presence of a proton or sodium gradient. F-type ATPases consist of two structural domains, F(1) containing the extramembraneous catalytic core and F(0) containing the membrane proton channel, linked together by a central stalk and a peripheral stalk. During catalysis, ATP synthesis in the catalytic domain of F(1) is coupled via a rotary mechanism of the central stalk subunits to proton translocation. Functionally, this protein is part of the stalk that links CF(0) to CF(1). It either transmits conformational changes from CF(0) to CF(1) or is implicated in proton conduction. The protein is ATP synthase subunit delta of Ureaplasma parvum serovar 3 (strain ATCC 27815 / 27 / NCTC 11736).